Here is a 622-residue protein sequence, read N- to C-terminus: Leucine-rich repeat and immunoglobulin-like domain-containing nogo receptor-interacting protein 1-B (622 aa).

Residues 1–43 (MTFLQVTIKMVAREASGHSYLVACWQPILILMLGTVLSGSATG) form the signal peptide. Cystine bridges form between C44/C50 and C48/C59. Residues 44-73 (CPSRCECSAQERSVVCHRRKLITLPEGIPI) enclose the LRRNT domain. Residues 44 to 563 (CPSRCECSAQ…FDMKTLIIAT (520 aa)) lie on the Extracellular side of the membrane. 11 LRR repeats span residues 74-95 (DTRL…EFLN), 98-119 (QLED…AFSN), 122-143 (GLRT…VFTG), 146-167 (NLTR…MFQE), 170-191 (NLKE…AFHG), 194-215 (SLEQ…AFSH), 218-239 (NLLT…SFRR), 266-287 (NITT…AIQH), 290-311 (YLRF…KMHN), 314-335 (RLQA…SFKG), and 338-359 (YLRV…AFHS). N146 carries an N-linked (GlcNAc...) asparagine glycan. N204 carries an N-linked (GlcNAc...) asparagine glycan. Residues N266, N276, and N295 are each glycosylated (N-linked (GlcNAc...) asparagine). N343 is a glycosylation site (N-linked (GlcNAc...) asparagine). The 55-residue stretch at 371–425 (NPLACDCRLLWVFRRRWRLNFNRQQPSCETPEFLQGKEFKDFPDVLPPNYFTCQK) folds into the LRRCT domain. 3 disulfide bridges follow: C375–C398, C377–C423, and C448–C499. The Ig-like C2-type domain occupies 413–515 (PDVLPPNYFT…GNDTRLAHLH (103 aa)). N494, N507, N528, and N544 each carry an N-linked (GlcNAc...) asparagine glycan. Residues 564-584 (TMGFISFLGVVLFCLVLLFLW) form a helical membrane-spanning segment. Residues 585–622 (SRGKGNAKPNIEIEYVPRKVDGENSPNEGSHKISMKMI) lie on the Cytoplasmic side of the membrane.

The protein localises to the cell membrane. In terms of biological role, may play a role in regulating axonal regeneration and plasticity in the adult central nervous system. The polypeptide is Leucine-rich repeat and immunoglobulin-like domain-containing nogo receptor-interacting protein 1-B (lingo1b) (Danio rerio (Zebrafish)).